The following is a 210-amino-acid chain: Prolactin (210 aa).

Residues 1 to 23 form the signal peptide; the sequence is MTQGSRLYFAVAVLMCGFVSING. 2 disulfides stabilise this stretch: C69/C183 and C200/C210.

It belongs to the somatotropin/prolactin family. As to expression, pituitary gland.

The protein resides in the secreted. The chain is Prolactin (prl1) from Carassius auratus (Goldfish).